The sequence spans 139 residues: Gene 22 protein (139 aa).

The protein is Gene 22 protein (22) of Mycobacterium phage D29 (Mycobacteriophage D29).